The sequence spans 554 residues: uncharacterized protein (554 aa).

Residues 1 to 33 form the signal peptide; sequence MKKILIIILFIIIFIVLIYSGLWFVIMFSLSHS.

This is an uncharacterized protein from Rickettsia prowazekii (strain Madrid E).